The following is a 315-amino-acid chain: Hydrogenase-4 component C (315 aa).

Residues 1–10 (MRQTLCDGYL) are Periplasmic-facing. The helical transmembrane segment at 11–31 (VIFALAQAVILLMLTPLFTGI) threads the bilayer. Residues 32–73 (SRQIRARMHSRRGPGIWQDYRDIHKLFKRQEVAPTSSGLMFR) are Cytoplasmic-facing. The chain crosses the membrane as a helical span at residues 74–94 (LMPWVLISSMLVLAMALPLFI). Residues 95–98 (TVSP) are Periplasmic-facing. The chain crosses the membrane as a helical span at residues 99-119 (FAGGGDLITLIYLLALFRFFF). Residues 120–140 (ALSGLDTGSPFAGVGASRELT) lie on the Cytoplasmic side of the membrane. Residues 141 to 161 (LGILVEPMLILSLLVLALIAG) form a helical membrane-spanning segment. Over 162–181 (STHIEMISNTLAMGWNSPLT) the chain is Periplasmic. Residues 182-202 (TVLALLACGFACFIEMGKIPF) form a helical membrane-spanning segment. At 203–228 (DVAEAEQELQEGPLTEYSGAGLALAK) the chain is on the cytoplasmic side. The chain crosses the membrane as a helical span at residues 229 to 249 (WGLGLKQVVMASLFVALFLPF). Residues 250 to 256 (GRAQELS) are Periplasmic-facing. Residues 257–277 (LACLLTSLVVTLLKVLLIFVL) traverse the membrane as a helical segment. Topologically, residues 278–289 (ASIAENTLARGR) are cytoplasmic. Residues 290-310 (FLLIHHVTWLGFSLAALAWVF) form a helical membrane-spanning segment. The Periplasmic portion of the chain corresponds to 311–315 (WLTGL).

Belongs to the complex I subunit 1 family.

The protein resides in the cell inner membrane. In terms of biological role, possible component of hydrogenase 4. This Escherichia coli (strain K12) protein is Hydrogenase-4 component C.